We begin with the raw amino-acid sequence, 293 residues long: Nucleotide-binding protein HRM2_27900 (293 aa).

An ATP-binding site is contributed by 11-18 (GLSGSGKS). 62 to 65 (DIRA) contacts GTP.

Belongs to the RapZ-like family.

Its function is as follows. Displays ATPase and GTPase activities. This chain is Nucleotide-binding protein HRM2_27900, found in Desulforapulum autotrophicum (strain ATCC 43914 / DSM 3382 / VKM B-1955 / HRM2) (Desulfobacterium autotrophicum).